The primary structure comprises 208 residues: Holliday junction branch migration complex subunit RuvA (208 aa).

The tract at residues 1–63 (MIAFVSGPVA…EDSLTLYGFA (63 aa)) is domain I. The interval 64–142 (NDDERQVFEL…EPVGAHIGQQ (79 aa)) is domain II. The flexible linker stretch occupies residues 143 to 147 (GIGTP). The segment at 148–208 (VTSGWRDQLQ…AALQTLNRAR (61 aa)) is domain III.

This sequence belongs to the RuvA family. Homotetramer. Forms an RuvA(8)-RuvB(12)-Holliday junction (HJ) complex. HJ DNA is sandwiched between 2 RuvA tetramers; dsDNA enters through RuvA and exits via RuvB. An RuvB hexamer assembles on each DNA strand where it exits the tetramer. Each RuvB hexamer is contacted by two RuvA subunits (via domain III) on 2 adjacent RuvB subunits; this complex drives branch migration. In the full resolvosome a probable DNA-RuvA(4)-RuvB(12)-RuvC(2) complex forms which resolves the HJ.

It is found in the cytoplasm. Functionally, the RuvA-RuvB-RuvC complex processes Holliday junction (HJ) DNA during genetic recombination and DNA repair, while the RuvA-RuvB complex plays an important role in the rescue of blocked DNA replication forks via replication fork reversal (RFR). RuvA specifically binds to HJ cruciform DNA, conferring on it an open structure. The RuvB hexamer acts as an ATP-dependent pump, pulling dsDNA into and through the RuvAB complex. HJ branch migration allows RuvC to scan DNA until it finds its consensus sequence, where it cleaves and resolves the cruciform DNA. In Streptomyces griseus subsp. griseus (strain JCM 4626 / CBS 651.72 / NBRC 13350 / KCC S-0626 / ISP 5235), this protein is Holliday junction branch migration complex subunit RuvA.